The primary structure comprises 98 residues: Hainantoxin-XVII-2 (98 aa).

An N-terminal signal peptide occupies residues 1-40 (MTTVGVSLFRRSPEKITMKIATFLGLSFLLIASYVLICEA). A propeptide spanning residues 41 to 64 (QHPGFQELLILEENMRDPENSKER) is cleaved from the precursor. 2 cysteine pairs are disulfide-bonded: cysteine 66-cysteine 81 and cysteine 73-cysteine 85.

Belongs to the hainantoxin family. 17 subfamily. Expressed by the venom gland.

Its subcellular location is the secreted. Functionally, putative ion channel inhibitor. The sequence is that of Hainantoxin-XVII-2 from Cyriopagopus hainanus (Chinese bird spider).